The sequence spans 166 residues: Endoribonuclease YbeY (166 aa).

Zn(2+)-binding residues include His132, His136, and His142.

Belongs to the endoribonuclease YbeY family. It depends on Zn(2+) as a cofactor.

It localises to the cytoplasm. Its function is as follows. Single strand-specific metallo-endoribonuclease involved in late-stage 70S ribosome quality control and in maturation of the 3' terminus of the 16S rRNA. The chain is Endoribonuclease YbeY from Clostridium botulinum (strain Eklund 17B / Type B).